A 602-amino-acid polypeptide reads, in one-letter code: Carbon catabolite repressor protein 4 homolog 1 (602 aa).

Positions 113-136 are disordered; that stretch reads ASAATEGNDEEELPRLNSSGSGSG. Glutamate 299 is a Mg(2+) binding site.

The protein belongs to the CCR4/nocturin family. As to quaternary structure, component of the CCR4-NOT complex, at least composed of CRR4 and CAF1 proteins. Requires Mg(2+) as cofactor.

It localises to the nucleus. The protein localises to the cytoplasm. It carries out the reaction Exonucleolytic cleavage of poly(A) to 5'-AMP.. Functionally, acts as a catalytic component of the CCR4-NOT core complex, which in the nucleus seems to be a general transcription factor, and in the cytoplasm the major mRNA deadenylase involved in mRNA turnover. This Arabidopsis thaliana (Mouse-ear cress) protein is Carbon catabolite repressor protein 4 homolog 1 (CCR4-1).